The following is a 412-amino-acid chain: MMRKLAILSVSSFLFVEALFQEYQCYGSSSNTRVLNELNYDNAGTNLYNELEMNYYGKQENWYSLKKNSRSLGENDDGNNNNGDNGREGKDEDKRDGNNEDNEKLRKPKHKKLKQPGDGNPDPNANPNVDPNANPNVDPNANPNVDPNANPNANPNANPNANPNANPNANPNANPNANPNANPNANPNANPNANPNANPNANPNANPNVDPNANPNANPNANPNANPNANPNANPNANPNANPNANPNANPNANPNANPNANPNANPNANPNANPNANPNANPNANPNKNNQGNGQGHNMPNDPNRNVDENANANNAVKNNNNEEPSDKHIEQYLKKIKNSISTEWSPCSVTCGNGIQVRIKPGSANKPKDELDYENDIEKKICKMEKCSSVFNVVNSSIGLIMVLSFLFLN.

The first 18 residues, Met-1–Ala-18, serve as a signal peptide directing secretion. A disordered region spans residues Ser-69 to Asp-328. A compositionally biased stretch (basic and acidic residues) spans Asn-85–Leu-105. Positions Lys-104–Lys-111 are required for the binding to heparan sulfate proteoglycans (HSPGs) on the surface of host hepatocytes. The tract at residues Lys-112–Pro-116 is region I; contains the proteolytic cleavage site. The span at Asn-120–Asn-288 shows a compositional bias: low complexity. A run of 41 repeats spans residues Pro-123 to Asn-126, Pro-127 to Asp-130, Pro-131 to Asn-134, Pro-135 to Asp-138, Pro-139 to Asn-142, Pro-143 to Asp-146, Pro-147 to Asn-150, Pro-151 to Asn-154, Pro-155 to Asn-158, Pro-159 to Asn-162, Pro-163 to Asn-166, Pro-167 to Asn-170, Pro-171 to Asn-174, Pro-175 to Asn-178, Pro-179 to Asn-182, Pro-183 to Asn-186, Pro-187 to Asn-190, Pro-191 to Asn-194, Pro-195 to Asn-198, Pro-199 to Asn-202, Pro-203 to Asn-206, Pro-207 to Asp-210, Pro-211 to Asn-214, Pro-215 to Asn-218, Pro-219 to Asn-222, Pro-223 to Asn-226, Pro-227 to Asn-230, Pro-231 to Asn-234, Pro-235 to Asn-238, Pro-239 to Asn-242, Pro-243 to Asn-246, Pro-247 to Asn-250, Pro-251 to Asn-254, Pro-255 to Asn-258, Pro-259 to Asn-262, Pro-263 to Asn-266, Pro-267 to Asn-270, Pro-271 to Asn-274, Pro-275 to Asn-278, Pro-279 to Asn-282, and Pro-283 to Asn-286. The segment at Pro-123–Asn-286 is 41 X 4 AA tandem repeats of P-N-[AV]-[ND]. Polar residues predominate over residues Lys-289–Pro-304. Positions Glu-310–Glu-324 are enriched in low complexity. Positions Lys-337–Ser-390 constitute a TSP type-1 domain. 2 disulfides stabilise this stretch: Cys-349/Cys-384 and Cys-353/Cys-389. Thr-352 is a glycosylation site (O-linked (Fuc) threonine). Residue Cys-389 is the site of GPI-anchor amidated cysteine attachment. Residues Ser-390–Asn-412 constitute a propeptide, removed in mature form.

It belongs to the plasmodium circumsporozoite protein family. Post-translationally, during host cell invasion, proteolytically cleaved at the cell membrane in the region I by a papain-like cysteine protease of parasite origin. Cleavage is triggered by the sporozoite contact with highly sulfated heparan sulfate proteoglycans (HSPGs) present on the host hepatocyte cell surface. Cleavage exposes the TSP type-1 (TSR) domain and is required for productive invasion of host hepatocytes but not for adhesion to the host cell membrane. Cleavage is dispensable for sporozoite development in the oocyst, motility and for traversal of host and vector cells. In terms of processing, O-glycosylated; maybe by POFUT2.

It localises to the cell membrane. The protein localises to the cytoplasm. Essential sporozoite protein. In the mosquito vector, required for sporozoite development in the oocyst, migration through the vector hemolymph and entry into the vector salivary glands. In the vertebrate host, required for sporozoite migration through the host dermis and infection of host hepatocytes. Binds to highly sulfated heparan sulfate proteoglycans (HSPGs) on the surface of host hepatocytes. Its function is as follows. In the vertebrate host, binds to highly sulfated heparan sulfate proteoglycans (HSPGs) on the surface of host hepatocytes and is required for sporozoite invasion of the host hepatocytes. The protein is Circumsporozoite protein of Plasmodium falciparum.